Consider the following 37-residue polypeptide: Large ribosomal subunit protein bL36c (37 aa).

This sequence belongs to the bacterial ribosomal protein bL36 family.

Its subcellular location is the plastid. It localises to the chloroplast. The protein is Large ribosomal subunit protein bL36c of Lactuca sativa (Garden lettuce).